The primary structure comprises 313 residues: C-type lectin domain-containing protein 162 (313 aa).

An N-terminal signal peptide occupies residues 1–17; that stretch reads MNIFTLLFIYFLSDTVA. Asparagine 28 and asparagine 41 each carry an N-linked (GlcNAc...) asparagine glycan. The 118-residue stretch at 28 to 145 folds into the C-type lectin domain; sequence NATGCFQFFR…DAMFLPFVCE (118 aa). A disulfide bond links cysteine 49 and cysteine 144. A glycan (N-linked (GlcNAc...) asparagine) is linked at asparagine 213. The tract at residues 244–313 is disordered; the sequence is VSQTETEMSR…RSKTIQISRG (70 aa). Residues 250–259 are compositionally biased toward basic and acidic residues; the sequence is EMSRSRKEKE. N-linked (GlcNAc...) asparagine glycosylation is found at asparagine 279 and asparagine 300. Basic and acidic residues predominate over residues 291 to 304; it reads SKEKREREENETIR.

It is found in the secreted. The polypeptide is C-type lectin domain-containing protein 162 (clec-162) (Caenorhabditis elegans).